The sequence spans 872 residues: Trichohyalin-like protein 1 (872 aa).

The region spanning 46 to 81 (CAIHAVERNLNLLNIDSNGAISFDEFVLAIFSFLNV) is the EF-hand domain. Polar residues predominate over residues 117–127 (QWTEGTSQTQD). Disordered stretches follow at residues 117-759 (QWTE…ERGA), 774-813 (LQQT…DSSD), and 830-872 (EFLP…APKQ). 8 stretches are compositionally biased toward basic and acidic residues: residues 142 to 155 (SLEE…RVDP), 164 to 190 (LPVE…KVDQ), 218 to 235 (TKGE…DILA), 296 to 307 (GKDEPSSEHVDL), 324 to 348 (AAKD…ETRD), 365 to 375 (RVERKGVRGPE), 399 to 435 (EDKK…KDSE), and 486 to 505 (SGEK…KEDD). The span at 538 to 570 (NSETSDLFVQGDSQSQTNPFRGSVQGSDSNNPE) shows a compositional bias: polar residues. Basic and acidic residues-rich tracts occupy residues 571 to 584 (TQKH…KRVQ), 592 to 608 (RGED…EHEG), and 664 to 684 (TKKD…KEED). Polar residues-rich tracts occupy residues 699-708 (ENNAVSQKTC) and 718-729 (SPQQLAGEQSLS). Positions 730–751 (TKEHDPSVSESGLEERMQRDQE) are enriched in basic and acidic residues. Composition is skewed to polar residues over residues 774–793 (LQQT…TASV) and 801–812 (NQSSASLTNDSS). The span at 849-865 (LEDKQGRPQREELEPQK) shows a compositional bias: basic and acidic residues.

Belongs to the S-100 family.

In Bos taurus (Bovine), this protein is Trichohyalin-like protein 1 (TCHHL1).